The sequence spans 141 residues: Large ribosomal subunit protein uL11B/uL11C (141 aa).

Belongs to the universal ribosomal protein uL11 family. As to quaternary structure, part of the ribosomal stalk of the 50S ribosomal subunit. Interacts with L10 and the large rRNA to form the base of the stalk. L10 forms an elongated spine to which L12 dimers bind in a sequential fashion forming a multimeric L10(L12)X complex. Post-translationally, one or more lysine residues are methylated.

In terms of biological role, forms part of the ribosomal stalk which helps the ribosome interact with GTP-bound translation factors. The polypeptide is Large ribosomal subunit protein uL11B/uL11C (Bacillus cereus (strain ATCC 14579 / DSM 31 / CCUG 7414 / JCM 2152 / NBRC 15305 / NCIMB 9373 / NCTC 2599 / NRRL B-3711)).